The chain runs to 79 residues: Small ribosomal subunit protein bS18 (79 aa).

It belongs to the bacterial ribosomal protein bS18 family. In terms of assembly, part of the 30S ribosomal subunit. Forms a tight heterodimer with protein bS6.

Binds as a heterodimer with protein bS6 to the central domain of the 16S rRNA, where it helps stabilize the platform of the 30S subunit. In Blochmanniella pennsylvanica (strain BPEN), this protein is Small ribosomal subunit protein bS18.